A 377-amino-acid polypeptide reads, in one-letter code: RING-H2 finger protein ATL22 (377 aa).

The first 23 residues, 1 to 23, serve as a signal peptide directing secretion; sequence MTSKLLPLLLNLIFLFFFPLLNA. Residues 244 to 264 form a helical membrane-spanning segment; it reads IMCLSLVGPLTALTFCVGLVM. The RING-type; atypical zinc finger occupies 327–369; it reads CPICLSEYATKETVRCLPECEHCFHTECIDAWLKLHSSCPVCR.

Belongs to the RING-type zinc finger family. ATL subfamily.

It is found in the membrane. The enzyme catalyses S-ubiquitinyl-[E2 ubiquitin-conjugating enzyme]-L-cysteine + [acceptor protein]-L-lysine = [E2 ubiquitin-conjugating enzyme]-L-cysteine + N(6)-ubiquitinyl-[acceptor protein]-L-lysine.. It participates in protein modification; protein ubiquitination. The polypeptide is RING-H2 finger protein ATL22 (ATL22) (Arabidopsis thaliana (Mouse-ear cress)).